The primary structure comprises 241 residues: Phosphoadenosine 5'-phosphosulfate reductase (241 aa).

C235 (nucleophile; cysteine thiosulfonate intermediate) is an active-site residue.

The protein belongs to the PAPS reductase family. CysH subfamily.

The protein resides in the cytoplasm. It carries out the reaction [thioredoxin]-disulfide + sulfite + adenosine 3',5'-bisphosphate + 2 H(+) = [thioredoxin]-dithiol + 3'-phosphoadenylyl sulfate. It participates in sulfur metabolism; hydrogen sulfide biosynthesis; sulfite from sulfate: step 3/3. Functionally, catalyzes the formation of sulfite from phosphoadenosine 5'-phosphosulfate (PAPS) using thioredoxin as an electron donor. In Xanthomonas campestris pv. campestris (strain 8004), this protein is Phosphoadenosine 5'-phosphosulfate reductase.